The primary structure comprises 150 residues: Ribonuclease H (150 aa).

The 141-residue stretch at 1 to 141 folds into the RNase H type-1 domain; the sequence is MKSIEVHTDG…VDVLARNQAI (141 aa). 4 residues coordinate Mg(2+): aspartate 9, glutamate 47, aspartate 69, and aspartate 133.

This sequence belongs to the RNase H family. As to quaternary structure, monomer. Mg(2+) is required as a cofactor.

The protein resides in the cytoplasm. It catalyses the reaction Endonucleolytic cleavage to 5'-phosphomonoester.. Endonuclease that specifically degrades the RNA of RNA-DNA hybrids. This is Ribonuclease H from Xanthomonas axonopodis pv. citri (strain 306).